The primary structure comprises 353 residues: Uroporphyrinogen decarboxylase (353 aa).

Residues 27–31 (RQAGR), Phe-46, Asp-76, Tyr-152, Ser-207, and His-321 each bind substrate.

Belongs to the uroporphyrinogen decarboxylase family. In terms of assembly, homodimer.

It is found in the cytoplasm. It carries out the reaction uroporphyrinogen III + 4 H(+) = coproporphyrinogen III + 4 CO2. It participates in porphyrin-containing compound metabolism; protoporphyrin-IX biosynthesis; coproporphyrinogen-III from 5-aminolevulinate: step 4/4. Catalyzes the decarboxylation of four acetate groups of uroporphyrinogen-III to yield coproporphyrinogen-III. This is Uroporphyrinogen decarboxylase from Listeria monocytogenes serovar 1/2a (strain ATCC BAA-679 / EGD-e).